We begin with the raw amino-acid sequence, 612 residues long: Kelch-like protein 40a (612 aa).

In terms of domain architecture, BTB spans 34–101 (VDCILKIKDK…IYTSDINLTE (68 aa)). The BACK domain maps to 136 to 238 (CLAIFRLGLL…PTSYFKEKVE (103 aa)). The segment covering 266 to 275 (RVKRSSHRKE) has biased composition (basic residues). A disordered region spans residues 266–290 (RVKRSSHRKEGKSAEFESDDDDEDG). Residues 281–290 (FESDDDDEDG) are compositionally biased toward acidic residues. Kelch repeat units follow at residues 350–402 (QIFV…EAEN), 403–452 (SIYV…SHKG), 453–500 (LVYV…VHKN), 502–547 (IYVV…ELGG), and 549–604 (LYAI…GVRL).

This sequence belongs to the KLHL40 family. Component of the BCR(KLHL40) E3 ubiquitin ligase complex. Expressed in skeletal muscle and heart. Detected, although at much lower levels, in brain, eye and fin.

The protein resides in the cytoplasm. Its subcellular location is the myofibril. It is found in the sarcomere. The protein localises to the a band. It localises to the i band. Functionally, substrate-specific adapter of a BCR (BTB-CUL3-RBX1) E3 ubiquitin ligase complex. Required for skeletal muscle development. The sequence is that of Kelch-like protein 40a (klhl40a) from Danio rerio (Zebrafish).